Consider the following 466-residue polypeptide: UDP-N-acetylmuramoylalanine--D-glutamate ligase (466 aa).

Residue 127–133 (GSNGKST) participates in ATP binding.

This sequence belongs to the MurCDEF family.

Its subcellular location is the cytoplasm. It carries out the reaction UDP-N-acetyl-alpha-D-muramoyl-L-alanine + D-glutamate + ATP = UDP-N-acetyl-alpha-D-muramoyl-L-alanyl-D-glutamate + ADP + phosphate + H(+). Its pathway is cell wall biogenesis; peptidoglycan biosynthesis. In terms of biological role, cell wall formation. Catalyzes the addition of glutamate to the nucleotide precursor UDP-N-acetylmuramoyl-L-alanine (UMA). This Ruegeria pomeroyi (strain ATCC 700808 / DSM 15171 / DSS-3) (Silicibacter pomeroyi) protein is UDP-N-acetylmuramoylalanine--D-glutamate ligase.